Reading from the N-terminus, the 373-residue chain is Zinc finger protein CONSTANS (373 aa).

Residues 15 to 57 (NRARPCDTCRSNACTVYCHADSAYLCMSCDAQVHSANRVASRH) form a B box-type 1; atypical zinc finger. Residues Cys-20, Cys-23, Cys-43, His-48, Cys-63, Cys-66, Cys-86, and His-91 each coordinate Zn(2+). A B box-type 2; atypical zinc finger spans residues 58-108 (KRVRVCESCERAPAAFLCEADDASLCTACDSEVHSANPLARRHQRVPILPI). Over residues 109 to 120 (SGNSFSSMTTTH) the composition is skewed to polar residues. The disordered stretch occupies residues 109–130 (SGNSFSSMTTTHHQSEKTMTDP). Basic and acidic residues predominate over residues 121–130 (HQSEKTMTDP). The region spanning 306 to 348 (REARVLRYREKRKTRKFEKTIRYASRKAYAEIRPRVNGRFAKR) is the CCT domain.

Belongs to the CONSTANS family. As to quaternary structure, interacts with ADO3, SPA1, SPA2, SPA3 and SPA4. Interacts with MRG1 and MRG2 (via MRG domain). Interacts (via B-box) with MIP1A. Interacts with AS1 to form a functional complex regulating FT expression. Interacts with NFYC9. Component of a red light-dependent nuclear complex made of PHL, PHYB and CO. Interacts directly with PHL in the presence of PHYB. In terms of tissue distribution, expressed in leaves, shoots and shoot apical meristem. Detected in the vascular tissue of the hypocotyl, the cotyledons and the leaves. Restricted to the protoxylem and phloem in young inflorescence stems and to the phloem only in older inflorescences. Also detected in the vascular tissue of the root.

The protein resides in the nucleus. Functionally, transcription factor that acts in the long day flowering pathway and may mediate between the circadian clock and the control of flowering. Plays a role in the regulation of flowering time by acting on 'SUPPRESSOR OF OVEREXPRESSION OF CO1', 'TERMINAL FLOWER 1' and 'FLOWERING LOCUS T'. Also regulates P5CS2 and ACS10 (involved in proline and ethylene biosynthesis, respectively). Regulates the expression of NAKR1 by binding to the 5'-TGTG(N2-3)ATG-3' motif. This chain is Zinc finger protein CONSTANS, found in Arabidopsis thaliana (Mouse-ear cress).